Reading from the N-terminus, the 147-residue chain is MATECPPKMILRKSEKLDKDASSKFLNRYIQTIERFQDEKSGSESVLSQLNRVLMYLKGEEIPLISLNLPVQGPPTEELIIPPEEMLETKEEESLKHAREENDDLHLDKETKKRLKKEKKKAARREKEEARKAKADTTQGVGEKEQS.

A disordered region spans residues 71-147 (VQGPPTEELI…TQGVGEKEQS (77 aa)). Over residues 74–84 (PPTEELIIPPE) the composition is skewed to low complexity. A compositionally biased stretch (basic and acidic residues) spans 87–111 (LETKEEESLKHAREENDDLHLDKET). Residues 112-124 (KKRLKKEKKKAAR) are compositionally biased toward basic residues. The span at 125 to 135 (REKEEARKAKA) shows a compositional bias: basic and acidic residues.

In terms of assembly, component of the RNA polymerase I (Pol I) complex consisting of 14 subunits. Part of a Pol I subcomplex consisting of the subunits A14 and A43. Interacts with rpa43. Post-translationally, phosphorylated.

The protein resides in the nucleus. It is found in the nucleolus. Functionally, DNA-dependent RNA polymerase catalyzes the transcription of DNA into RNA using the four ribonucleoside triphosphates as substrates. Component of RNA polymerase I which synthesizes ribosomal RNA precursors. A14 seems to play a role in the stability of Pol I subunit A43 and association of rrn3 to Pol I. The polypeptide is DNA-directed RNA polymerase I subunit rpa14 (ker1) (Schizosaccharomyces pombe (strain 972 / ATCC 24843) (Fission yeast)).